The primary structure comprises 881 residues: Plakophilin-2 (881 aa).

A required for interaction with influenza A virus RNA polymerase subunit PB1 region spans residues 1 to 348; sequence MAAPGAPAEY…FTDSQLGNAD (348 aa). A required for binding to single-stranded DNA region spans residues 1-360; sequence MAAPGAPAEY…MTLERAVSML (360 aa). Serine 44 carries the phosphoserine modification. Arginine 46 is subject to Omega-N-methylarginine. Serine 82 carries the post-translational modification Phosphoserine; by MARK3. Phosphoserine is present on residues serine 132, serine 135, serine 151, serine 154, serine 155, serine 169, and serine 172. The residue at position 177 (threonine 177) is a Phosphothreonine. A phosphoserine mark is found at serine 183, serine 197, serine 251, serine 294, and serine 329. A disordered region spans residues 282–314; that stretch reads QNRASRSSWHQSSFHSTRTLREAGPSVAVDSSG. Residues 286 to 297 are compositionally biased toward low complexity; that stretch reads SRSSWHQSSFHS. ARM repeat units lie at residues 341-383, 385-424, 427-467, 571-616, 671-711, 719-758, 763-804, and 807-849; these read DSQL…ECFQ, SEAR…NLVF, NDNK…NLRS, DGRK…NLSY, PKGV…NLTA, SVAQ…NLSR, QNEI…NIIQ, and YQNA…SLWA.

This sequence belongs to the beta-catenin family. As to quaternary structure, interacts with DSC2. Interacts with JUP. Interacts with KRT5/CK5, KRT8/CK8, KRT14/CK14, KRT18/CK18 and VIM. Interacts (via N-terminus) with MARK3/C-TAK1. Interacts with DSP. Interacts with DSG1, DSG2 and DSG3. Interacts (via N-terminus) with CTNNB1. Interacts with CDH1. Interacts with the RNA polymerase III (Pol III) complex proteins POLR3A/RPC155, POLR3F/RPC39 and POLR3C/RPC82. Interacts with CTNNA3. Interacts (via N-terminus) with SCN5A/Nav1.5. Interacts with ANK3/ANKG and GJA1/CX43. (Microbial infection) Interacts (via N-terminus) with influenza A virus RNA polymerase subunit PB1 (via C-terminus); the interaction competitively inhibits the interaction between the subunits PB1 and PB2. As to expression, expressed at intercalated disks in the heart (at protein level). Expressed in gingival epithelial, endothelial and fibroblast cells (at protein level). Faintly expressed in tracheal epithelial cells (at protein level). Widely expressed. Found at desmosomal plaques in simple and stratified epithelia and in non-epithelial tissues such as myocardium and lymph node follicles. In most stratified epithelia found in the desmosomes of the basal cell layer and seems to be absent from suprabasal strata. (Microbial infection) Abundantly expressed in tracheal epithelial cells following influenza A virus infection (at protein level).

It localises to the nucleus. Its subcellular location is the cell junction. The protein localises to the desmosome. The protein resides in the cytoplasm. A component of desmosome cell-cell junctions which are required for positive regulation of cellular adhesion. Regulates focal adhesion turnover resulting in changes in focal adhesion size, cell adhesion and cell spreading, potentially via transcriptional modulation of beta-integrins. Required to maintain gingival epithelial barrier function. Important component of the desmosome that is also required for localization of desmosome component proteins such as DSC2, DSG2 and JUP to the desmosome cell-cell junction. Required for the formation of desmosome cell junctions in cardiomyocytes, thereby required for the correct formation of the heart, specifically trabeculation and formation of the atria walls. Loss of desmosome cell junctions leads to mis-localization of DSP and DSG2 resulting in disruption of cell-cell adhesion and disordered intermediate filaments. Modulates profibrotic gene expression in cardiomyocytes via regulation of DSP expression and subsequent activation of downstream TGFB1 and MAPK14/p38 MAPK signaling. Required for cardiac sodium current propagation and electrical synchrony in cardiac myocytes, via ANK3 stabilization and modulation of SCN5A/Nav1.5 localization to cell-cell junctions. Required for mitochondrial function, nuclear envelope integrity and positive regulation of SIRT3 transcription via maintaining DES localization at its nuclear envelope and cell tip anchoring points, and thereby preserving regulation of the transcriptional program. Maintenance of nuclear envelope integrity protects against DNA damage and transcriptional dysregulation of genes, especially those involved in the electron transport chain, thereby preserving mitochondrial function and protecting against superoxide radical anion generation. Binds single-stranded DNA (ssDNA). May regulate the localization of GJA1 to gap junctions in intercalated disks of the heart. Involved in the inhibition of viral infection by influenza A viruses (IAV). Acts as a host restriction factor for IAV viral propagation, potentially via disrupting the interaction of IAV polymerase complex proteins. In Homo sapiens (Human), this protein is Plakophilin-2.